The chain runs to 184 residues: ATP synthase subunit delta (184 aa).

Belongs to the ATPase delta chain family. F-type ATPases have 2 components, F(1) - the catalytic core - and F(0) - the membrane proton channel. F(1) has five subunits: alpha(3), beta(3), gamma(1), delta(1), epsilon(1). F(0) has three main subunits: a(1), b(2) and c(10-14). The alpha and beta chains form an alternating ring which encloses part of the gamma chain. F(1) is attached to F(0) by a central stalk formed by the gamma and epsilon chains, while a peripheral stalk is formed by the delta and b chains.

It is found in the cell inner membrane. F(1)F(0) ATP synthase produces ATP from ADP in the presence of a proton or sodium gradient. F-type ATPases consist of two structural domains, F(1) containing the extramembraneous catalytic core and F(0) containing the membrane proton channel, linked together by a central stalk and a peripheral stalk. During catalysis, ATP synthesis in the catalytic domain of F(1) is coupled via a rotary mechanism of the central stalk subunits to proton translocation. Its function is as follows. This protein is part of the stalk that links CF(0) to CF(1). It either transmits conformational changes from CF(0) to CF(1) or is implicated in proton conduction. The polypeptide is ATP synthase subunit delta (Zymomonas mobilis subsp. mobilis (strain ATCC 31821 / ZM4 / CP4)).